Reading from the N-terminus, the 152-residue chain is SMN complex subunit smn1 (152 aa).

Positions 26 to 51 (KKYHSIEAKGGVSDPDSRLDGEKLIS) are interacts with yip11/gem2. The disordered stretch occupies residues 88–110 (DNKGLSDEKPETRAAETHQEFME). A compositionally biased stretch (basic and acidic residues) spans 91 to 108 (GLSDEKPETRAAETHQEF). The may interact with gem8 stretch occupies residues 130–152 (SWYYAGYYTGLAEGLAKSEQRKD).

The protein belongs to the SMN family. Homooligomer; may form homodimers and homotetramers. Part of the core SMN complex at least composed of smn1, yip11/gem2, gem6, gem7 and gem8. Part of the SMN-Sm complex. Interacts with yip11/gem2; the interaction is direct. Interacts with gem8; the interaction is direct. Interacts with proteins of the Sm complex, including smn1, smb1, smd1, smd2 and smd3.

It is found in the nucleus. Its function is as follows. The SMN complex catalyzes the assembly of small nuclear ribonucleoproteins (snRNPs), the building blocks of the spliceosome, and thereby plays an important role in the splicing of cellular pre-mRNAs. Most spliceosomal snRNPs contain a common set of Sm proteins smb1, smd1, smd2, smd3, sme1, smf1 and smg1 that assemble in a heptameric protein ring on the Sm site of the small nuclear RNA to form the core snRNP (Sm core). In the cytosol, the Sm proteins smd1, smd2, sme1, smf1 and smg1 (5Sm) are trapped in an inactive 6S pICln-Sm complex by the chaperone saf5 that controls the assembly of the core snRNP. To assemble core snRNPs, the SMN complex accepts the trapped 5Sm proteins from saf5 forming an intermediate. Binding of snRNA inside 5Sm triggers eviction of the SMN complex, thereby allowing binding of smd3 and smb1 to complete assembly of the core snRNP. Within the SMN complex, smn1 acts as a structural backbone and together with yip11/gem2 it gathers the Sm complex subunits. This Schizosaccharomyces pombe (strain 972 / ATCC 24843) (Fission yeast) protein is SMN complex subunit smn1.